The sequence spans 140 residues: Transcription antitermination protein NusB (140 aa).

Belongs to the NusB family.

Functionally, involved in transcription antitermination. Required for transcription of ribosomal RNA (rRNA) genes. Binds specifically to the boxA antiterminator sequence of the ribosomal RNA (rrn) operons. The sequence is that of Transcription antitermination protein NusB from Myxococcus xanthus (strain DK1622).